The primary structure comprises 605 residues: Inactive LRR receptor-like serine/threonine-protein kinase BIR2 (605 aa).

Positions 1-28 are cleaved as a signal peptide; that stretch reads MKEIGSKPRKLLPLCFIIFLCFCSSVMA. Topologically, residues 29–229 are extracellular; it reads ADEDDIRCLR…CGGLSKKNLG (201 aa). An N-linked (GlcNAc...) asparagine glycan is attached at Asn58. LRR repeat units lie at residues 101–125, 127–150, 152–173, and 174–197; these read CASL…LCNW, PFLV…LAKC, FVNS…QFSA, and LGRL…FFSS. A helical membrane pass occupies residues 230-250; the sequence is IIIAAGVFGAAASMLLAFGIW. Residues 251-605 lie on the Cytoplasmic side of the membrane; that stretch reads WYYHLKWTRR…IFDTQENEKV (355 aa). Residue Ser271 is modified to Phosphoserine; by BAK1. The residue at position 283 (Thr283) is a Phosphothreonine; by BAK1. Ser286 is subject to Phosphoserine; by BAK1. A Phosphothreonine; by BAK1 modification is found at Thr304. One can recognise a Protein kinase domain in the interval 307–578; sequence FNSENIIVST…FQAYQSLKAI (272 aa). 313 to 321 is an ATP binding site; the sequence is IVSTRTGTT. Ser330 carries the phosphoserine; by BAK1 modification. Residue Lys335 participates in ATP binding. Ser389 is subject to Phosphoserine; by BAK1. Thr402 is subject to Phosphothreonine. Phosphoserine; by BAK1 is present on residues Ser448 and Ser462. At Thr466 the chain carries Phosphothreonine; by BAK1. Tyr479 bears the Phosphotyrosine mark. Phosphothreonine is present on Thr482. Ser486 is subject to Phosphoserine. Thr533 carries the phosphothreonine; by BAK1 modification.

It belongs to the protein kinase superfamily. Ser/Thr protein kinase family. Interacts constitutively with BAK1, when phosphorylated, thereby preventing interaction with the ligand-binding LRR-RLK FLS2. Upon infection, pathogen-associated molecular patterns (PAMP) perception leads to BIR2 release from the BAK1 complex and enables the recruitment of BAK1 into the FLS2 complex. In terms of processing, phosphorylated by BAK1, this interacts promotes interaction with BAK1.

Its subcellular location is the cell membrane. In terms of biological role, pseudokinases lacking protein kinase activity and unable to bind ATP-analogs. Negative regulator of pathogen-associated molecular patterns- (PAMP-) triggered immunity by limiting BAK1-receptor complex formation in the absence of ligands. The protein is Inactive LRR receptor-like serine/threonine-protein kinase BIR2 of Arabidopsis thaliana (Mouse-ear cress).